The chain runs to 218 residues: Adenylate kinase (218 aa).

ATP is bound at residue 10-15; the sequence is GAGKGT. Residues 30 to 59 are NMP; the sequence is STGDMLRAAINEGTPLGLEAKKVMDAGKLV. AMP is bound by residues Thr31, Arg36, 57-59, 85-88, and Gln92; these read KLV and GFPR. The tract at residues 122-159 is LID; it reads GRRVHPASGRTYHVLFNPPAKEGVDDITGDPLVQREDD. ATP is bound by residues Arg123 and 132 to 133; that span reads TY. The AMP site is built by Arg156 and Arg167. Gly203 serves as a coordination point for ATP.

Belongs to the adenylate kinase family. Monomer.

It localises to the cytoplasm. The enzyme catalyses AMP + ATP = 2 ADP. It functions in the pathway purine metabolism; AMP biosynthesis via salvage pathway; AMP from ADP: step 1/1. Functionally, catalyzes the reversible transfer of the terminal phosphate group between ATP and AMP. Plays an important role in cellular energy homeostasis and in adenine nucleotide metabolism. The sequence is that of Adenylate kinase from Chlorobium phaeobacteroides (strain BS1).